The chain runs to 404 residues: AT-hook motif nuclear-localized protein 6 (404 aa).

The disordered stretch occupies residues 40-112; sequence TTVVTPLPPP…TPISSSIPLS (73 aa). Residues 45-55 are compositionally biased toward pro residues; the sequence is PLPPPPAPSSA. Residues 56–70 show a composition bias toward low complexity; the sequence is PVPTTVTPGSATAST. The Bipartite nuclear localization signal motif lies at 76-84; sequence KKKRGRPRK. Residues 76–88 constitute a DNA-binding region (a.T hook); it reads KKKRGRPRKYAPD. Over residues 98-112 the composition is skewed to low complexity; sequence PTLSPTPISSSIPLS. One can recognise a PPC domain in the interval 157-299; sequence GANFTTHQFT…RVMEAFAPPQ (143 aa). Residues 365 to 404 form a disordered region; that stretch reads AYHGYGNMNTGTTHKEEHEDEDGGDDDDDSGDTRSQSHSG. Positions 382–394 are enriched in acidic residues; sequence HEDEDGGDDDDDS.

It localises to the nucleus. Transcription factor that specifically binds AT-rich DNA sequences related to the nuclear matrix attachment regions (MARs). This is AT-hook motif nuclear-localized protein 6 from Arabidopsis thaliana (Mouse-ear cress).